A 398-amino-acid chain; its full sequence is Succinate--CoA ligase [ADP-forming] subunit beta (398 aa).

An ATP-grasp domain is found at 9 to 254 (KALLKSYGAP…TTEEDEKEIE (246 aa)). ATP contacts are provided by residues Lys-46, 53 to 55 (GRG), Glu-109, Ala-112, and Glu-117. Residues Asn-209 and Asp-223 each contribute to the Mg(2+) site. Substrate is bound by residues Asn-274 and 331–333 (GIM).

Belongs to the succinate/malate CoA ligase beta subunit family. In terms of assembly, heterotetramer of two alpha and two beta subunits. Requires Mg(2+) as cofactor.

It catalyses the reaction succinate + ATP + CoA = succinyl-CoA + ADP + phosphate. The catalysed reaction is GTP + succinate + CoA = succinyl-CoA + GDP + phosphate. It participates in carbohydrate metabolism; tricarboxylic acid cycle; succinate from succinyl-CoA (ligase route): step 1/1. Its function is as follows. Succinyl-CoA synthetase functions in the citric acid cycle (TCA), coupling the hydrolysis of succinyl-CoA to the synthesis of either ATP or GTP and thus represents the only step of substrate-level phosphorylation in the TCA. The beta subunit provides nucleotide specificity of the enzyme and binds the substrate succinate, while the binding sites for coenzyme A and phosphate are found in the alpha subunit. This is Succinate--CoA ligase [ADP-forming] subunit beta from Sinorhizobium medicae (strain WSM419) (Ensifer medicae).